Reading from the N-terminus, the 839-residue chain is Homeobox-leucine zipper protein HOX10 (839 aa).

Disordered regions lie at residues 1–24 (MAAAVAMRGSSSDGGGYDKVSGMD) and 132–157 (QNTPLANDTSCESNVTTPQNPLRDAS). Residues 24-87 (DSGKYVRYTP…NRRCRDKQRK (64 aa)) constitute a DNA-binding region (homeobox). Residues 91–134 (RLQAVNRKLTAMNKLLMEENERLQKQVSQLVHENAHMRQQLQNT) are a coiled coil. The START domain occupies 155-383 (DASNPSGLLS…IAQETSGEVV (229 aa)).

This sequence belongs to the HD-ZIP homeobox family. Class III subfamily. Expressed in stems, leaf sheaths and blades and panicles.

It is found in the nucleus. Functionally, probable transcription factor. The chain is Homeobox-leucine zipper protein HOX10 (HOX10) from Oryza sativa subsp. japonica (Rice).